We begin with the raw amino-acid sequence, 194 residues long: uncharacterized protein (194 aa).

A disordered region spans residues 45-138; it reads QLLGVPEQHR…AGPPRGDWGV (94 aa). Phosphoserine is present on residues Ser-69 and Ser-76. The segment covering 97 to 106 has biased composition (pro residues); the sequence is PPLPPPPVLP. Over residues 107-116 the composition is skewed to low complexity; that stretch reads GPGEELPGAR. Residues 117–128 show a composition bias toward gly residues; sequence LPGGGGDDGAGR.

This is an uncharacterized protein from Homo sapiens (Human).